We begin with the raw amino-acid sequence, 949 residues long: Bifunctional glutamine synthetase adenylyltransferase/adenylyl-removing enzyme (949 aa).

The tract at residues 1 to 450 (MQNQGNKVLS…HFNATVGGTD (450 aa)) is adenylyl removase. The segment at 455 to 949 (NDHWTALFWN…IEIYNEILAI (495 aa)) is adenylyl transferase.

It belongs to the GlnE family. Mg(2+) serves as cofactor.

It carries out the reaction [glutamine synthetase]-O(4)-(5'-adenylyl)-L-tyrosine + phosphate = [glutamine synthetase]-L-tyrosine + ADP. It catalyses the reaction [glutamine synthetase]-L-tyrosine + ATP = [glutamine synthetase]-O(4)-(5'-adenylyl)-L-tyrosine + diphosphate. In terms of biological role, involved in the regulation of glutamine synthetase GlnA, a key enzyme in the process to assimilate ammonia. When cellular nitrogen levels are high, the C-terminal adenylyl transferase (AT) inactivates GlnA by covalent transfer of an adenylyl group from ATP to specific tyrosine residue of GlnA, thus reducing its activity. Conversely, when nitrogen levels are low, the N-terminal adenylyl removase (AR) activates GlnA by removing the adenylyl group by phosphorolysis, increasing its activity. The regulatory region of GlnE binds the signal transduction protein PII (GlnB) which indicates the nitrogen status of the cell. This is Bifunctional glutamine synthetase adenylyltransferase/adenylyl-removing enzyme from Shewanella frigidimarina (strain NCIMB 400).